The primary structure comprises 429 residues: Violacein synthase (429 aa).

3 to 21 (RAIIVGGGLAGGLTAIYLA) is an FAD binding site.

It depends on FAD as a cofactor.

The catalysed reaction is protoviolaceinate + NADPH + O2 + H(+) = violaceinate + NADP(+) + H2O. The enzyme catalyses protoviolaceinate + NADH + O2 + H(+) = violaceinate + NAD(+) + H2O. It carries out the reaction protodeoxyviolaceinate + NADPH + O2 + H(+) = deoxyviolaceinate + NADP(+) + H2O. It catalyses the reaction protodeoxyviolaceinate + NADH + O2 + H(+) = deoxyviolaceinate + NAD(+) + H2O. The protein operates within pigment biosynthesis; violacein biosynthesis. Catalyzes the hydroxylation of the 16-position of protoviolaceinate and protodeoxyviolaceinate to form violacein and deoxyviolacein, respectively. This chain is Violacein synthase (vioC), found in Chromobacterium violaceum (strain ATCC 12472 / DSM 30191 / JCM 1249 / CCUG 213 / NBRC 12614 / NCIMB 9131 / NCTC 9757 / MK).